A 419-amino-acid chain; its full sequence is 3-isopropylmalate dehydratase large subunit (419 aa).

Positions 300, 360, and 363 each coordinate [4Fe-4S] cluster.

It belongs to the aconitase/IPM isomerase family. LeuC type 2 subfamily. In terms of assembly, heterodimer of LeuC and LeuD. Requires [4Fe-4S] cluster as cofactor.

It carries out the reaction (2R,3S)-3-isopropylmalate = (2S)-2-isopropylmalate. Its pathway is amino-acid biosynthesis; L-leucine biosynthesis; L-leucine from 3-methyl-2-oxobutanoate: step 2/4. Its function is as follows. Catalyzes the isomerization between 2-isopropylmalate and 3-isopropylmalate, via the formation of 2-isopropylmaleate. This chain is 3-isopropylmalate dehydratase large subunit, found in Acetivibrio thermocellus (strain ATCC 27405 / DSM 1237 / JCM 9322 / NBRC 103400 / NCIMB 10682 / NRRL B-4536 / VPI 7372) (Clostridium thermocellum).